We begin with the raw amino-acid sequence, 66 residues long: Large ribosomal subunit protein uL29 (66 aa).

It belongs to the universal ribosomal protein uL29 family.

The sequence is that of Large ribosomal subunit protein uL29 from Rhizobium rhizogenes (strain K84 / ATCC BAA-868) (Agrobacterium radiobacter).